The following is a 626-amino-acid chain: Putative ankyrin repeat protein L768 (626 aa).

5 ANK repeats span residues 217-246 (NLYD…EYDF), 333-362 (DLDM…NINK), 421-451 (TAEN…TEHI), 515-545 (SNLK…NQDY), and 547-571 (QWAL…NVNP).

The protein is Putative ankyrin repeat protein L768 of Acanthamoeba polyphaga mimivirus (APMV).